The chain runs to 940 residues: Isoleucine--tRNA ligase (940 aa).

Positions 58–68 match the 'HIGH' region motif; that stretch reads PYANGSIHIGH. Glu564 serves as a coordination point for L-isoleucyl-5'-AMP. Residues 605–609 carry the 'KMSKS' region motif; the sequence is KMSKS. Lys608 contributes to the ATP binding site. Zn(2+) contacts are provided by Cys903, Cys906, Cys923, and Cys926.

Belongs to the class-I aminoacyl-tRNA synthetase family. IleS type 1 subfamily. In terms of assembly, monomer. Zn(2+) serves as cofactor.

The protein localises to the cytoplasm. The catalysed reaction is tRNA(Ile) + L-isoleucine + ATP = L-isoleucyl-tRNA(Ile) + AMP + diphosphate. In terms of biological role, catalyzes the attachment of isoleucine to tRNA(Ile). As IleRS can inadvertently accommodate and process structurally similar amino acids such as valine, to avoid such errors it has two additional distinct tRNA(Ile)-dependent editing activities. One activity is designated as 'pretransfer' editing and involves the hydrolysis of activated Val-AMP. The other activity is designated 'posttransfer' editing and involves deacylation of mischarged Val-tRNA(Ile). The polypeptide is Isoleucine--tRNA ligase (Shewanella sp. (strain MR-7)).